The chain runs to 532 residues: 4-amino-L-phenylalanyl-[CmlP-peptidyl-carrier-protein] 3-hydroxylase (532 aa).

Fe cation-binding residues include H305, H307, D309, H310, E377, and D403.

Belongs to the metallo-beta-lactamase superfamily. As to quaternary structure, homodimer. Fe(2+) is required as a cofactor.

The enzyme catalyses 4-amino-L-phenylalanyl-[peptidyl-carrier protein] + AH2 + O2 = (2R)-2-(4-aminophenyl)-L-seryl-[peptidyl-carrier protein] + A + H2O. Its pathway is antibiotic biosynthesis. In terms of biological role, involved in chloramphenicol biosynthesis. Catalyzes the beta-hydroxylation of 4-amino-L-phenylalanine (L-PAPA) covalently bound to CmlP to form L-p-aminophenylserine. The sequence is that of 4-amino-L-phenylalanyl-[CmlP-peptidyl-carrier-protein] 3-hydroxylase from Streptomyces venezuelae (strain ATCC 10712 / CBS 650.69 / DSM 40230 / JCM 4526 / NBRC 13096 / PD 04745).